The chain runs to 138 residues: Transcription antitermination protein NusB (138 aa).

It belongs to the NusB family.

Functionally, involved in transcription antitermination. Required for transcription of ribosomal RNA (rRNA) genes. Binds specifically to the boxA antiterminator sequence of the ribosomal RNA (rrn) operons. The protein is Transcription antitermination protein NusB of Helicobacter pylori (strain ATCC 700392 / 26695) (Campylobacter pylori).